Here is a 208-residue protein sequence, read N- to C-terminus: Imidazoleglycerol-phosphate dehydratase (208 aa).

It belongs to the imidazoleglycerol-phosphate dehydratase family.

It carries out the reaction D-erythro-1-(imidazol-4-yl)glycerol 3-phosphate = 3-(imidazol-4-yl)-2-oxopropyl phosphate + H2O. It functions in the pathway amino-acid biosynthesis; L-histidine biosynthesis; L-histidine from 5-phospho-alpha-D-ribose 1-diphosphate: step 6/9. The polypeptide is Imidazoleglycerol-phosphate dehydratase (his3) (Trichoderma harzianum (Hypocrea lixii)).